The sequence spans 946 residues: Inter-alpha-trypsin inhibitor heavy chain H2 (946 aa).

A signal peptide spans 1–18; sequence MQRPVCLLIWLFLLEAQA. Residues 19–54 constitute a propeptide that is removed on maturation; that stretch reads FEIPINGNSEFAEYSDLVELAPDKLPFVQENGRHQR. A VIT domain is found at 56–185; it reads LPEESGEETD…KVQFELHYQE (130 aa). The residue at position 60 (Ser-60) is a Phosphoserine. N-linked (GlcNAc...) asparagine glycans are attached at residues Asn-118 and Asn-263. A 4-carboxyglutamate mark is found at Glu-282 and Glu-283. The VWFA domain occupies 308–468; that stretch reads PKNILFVIDV…YDFLKRLSNE (161 aa). N-linked (GlcNAc...) asparagine glycosylation occurs at Asn-445. Ser-466 carries the post-translational modification Phosphoserine. An Aspartate 1-(chondroitin 4-sulfate)-ester modification is found at Asp-702. Residues 703–946 constitute a propeptide that is removed on maturation; sequence PHFIIYLPKS…PQLYSFLKRP (244 aa). Ser-886 is subject to Phosphoserine.

Belongs to the ITIH family. I-alpha-I plasma protease inhibitors are assembled from one or two heavy chains (HC) and one light chain, bikunin. Inter-alpha-inhibitor (I-alpha-I) is composed of ITIH1/HC1, ITIH2/HC2 and bikunin. Heavy chains are linked to bikunin via chondroitin 4-sulfate esterified to the alpha-carboxyl of the C-terminal aspartate after propeptide cleavage. Post-translationally, phosphorylated by FAM20C in the extracellular medium. In terms of tissue distribution, expressed in both liver and brain.

It is found in the secreted. In terms of biological role, may act as a carrier of hyaluronan in serum or as a binding protein between hyaluronan and other matrix protein, including those on cell surfaces in tissues to regulate the localization, synthesis and degradation of hyaluronan which are essential to cells undergoing biological processes. This is Inter-alpha-trypsin inhibitor heavy chain H2 (Itih2) from Mus musculus (Mouse).